Here is a 349-residue protein sequence, read N- to C-terminus: Phosphoribosylformylglycinamidine cyclo-ligase (349 aa).

The protein belongs to the AIR synthase family.

It is found in the cytoplasm. The enzyme catalyses 2-formamido-N(1)-(5-O-phospho-beta-D-ribosyl)acetamidine + ATP = 5-amino-1-(5-phospho-beta-D-ribosyl)imidazole + ADP + phosphate + H(+). Its pathway is purine metabolism; IMP biosynthesis via de novo pathway; 5-amino-1-(5-phospho-D-ribosyl)imidazole from N(2)-formyl-N(1)-(5-phospho-D-ribosyl)glycinamide: step 2/2. The chain is Phosphoribosylformylglycinamidine cyclo-ligase from Bordetella pertussis (strain Tohama I / ATCC BAA-589 / NCTC 13251).